Consider the following 190-residue polypeptide: Xanthine phosphoribosyltransferase (190 aa).

Xanthine is bound by residues L20 and N27. 128 to 132 (ANGHA) serves as a coordination point for 5-phospho-alpha-D-ribose 1-diphosphate. Position 156 (K156) interacts with xanthine.

It belongs to the purine/pyrimidine phosphoribosyltransferase family. Xpt subfamily. In terms of assembly, homodimer.

The protein resides in the cytoplasm. The catalysed reaction is XMP + diphosphate = xanthine + 5-phospho-alpha-D-ribose 1-diphosphate. It functions in the pathway purine metabolism; XMP biosynthesis via salvage pathway; XMP from xanthine: step 1/1. Functionally, converts the preformed base xanthine, a product of nucleic acid breakdown, to xanthosine 5'-monophosphate (XMP), so it can be reused for RNA or DNA synthesis. The chain is Xanthine phosphoribosyltransferase from Ectopseudomonas mendocina (strain ymp) (Pseudomonas mendocina).